The following is a 781-amino-acid chain: Lon protease (781 aa).

One can recognise a Lon N-terminal domain in the interval 16–214 (ANVLVTRGIV…KILSFTIDER (199 aa)). 365–372 (GPPGVGKT) is a binding site for ATP. The 181-residue stretch at 601–781 (EYMPGVVNGM…YDDVYNRLFK (181 aa)) folds into the Lon proteolytic domain. Residues Ser688 and Lys731 contribute to the active site.

This sequence belongs to the peptidase S16 family. Homohexamer. Organized in a ring with a central cavity.

The protein resides in the cytoplasm. It catalyses the reaction Hydrolysis of proteins in presence of ATP.. Its function is as follows. ATP-dependent serine protease that mediates the selective degradation of mutant and abnormal proteins as well as certain short-lived regulatory proteins. Required for cellular homeostasis and for survival from DNA damage and developmental changes induced by stress. Degrades polypeptides processively to yield small peptide fragments that are 5 to 10 amino acids long. Binds to DNA in a double-stranded, site-specific manner. In Malacoplasma penetrans (strain HF-2) (Mycoplasma penetrans), this protein is Lon protease.